Here is a 240-residue protein sequence, read N- to C-terminus: Large ribosomal subunit protein uL2 (240 aa).

Over residues 1–11 the composition is skewed to polar residues; that stretch reads MGKRLISQNRG. Disordered stretches follow at residues 1–25 and 207–240; these read MGKR…HKRK and GGRH…TGKR. Basic residues-rich tracts occupy residues 13–25 and 224–240; these read GTPK…HKRK and SPGR…TGKR.

This sequence belongs to the universal ribosomal protein uL2 family. In terms of assembly, part of the 50S ribosomal subunit. Forms a bridge to the 30S subunit in the 70S ribosome.

Functionally, one of the primary rRNA binding proteins. Required for association of the 30S and 50S subunits to form the 70S ribosome, for tRNA binding and peptide bond formation. It has been suggested to have peptidyltransferase activity; this is somewhat controversial. Makes several contacts with the 16S rRNA in the 70S ribosome. This is Large ribosomal subunit protein uL2 from Methanococcus maripaludis (strain DSM 14266 / JCM 13030 / NBRC 101832 / S2 / LL).